Consider the following 76-residue polypeptide: Cytochrome c oxidase subunit 6C-2 (76 aa).

Residues 4-14 (GALLPKPQMRG) lie on the Mitochondrial matrix side of the membrane. Residues 15–55 (LLAKRLRVHIVGAFVVALGVAAAYKFGVAEPRKKAYADFYR) traverse the membrane as a helical segment. The Mitochondrial intermembrane segment spans residues 56–76 (NYDSMKDFEEMRQAGVFQSAK). Serine 74 is modified (phosphoserine).

Belongs to the cytochrome c oxidase subunit 6c family. Component of the cytochrome c oxidase (complex IV, CIV), a multisubunit enzyme composed of 14 subunits. The complex is composed of a catalytic core of 3 subunits MT-CO1, MT-CO2 and MT-CO3, encoded in the mitochondrial DNA, and 11 supernumerary subunits COX4I, COX5A, COX5B, COX6A, COX6B, COX6C, COX7A, COX7B, COX7C, COX8 and NDUFA4, which are encoded in the nuclear genome. The complex exists as a monomer or a dimer and forms supercomplexes (SCs) in the inner mitochondrial membrane with NADH-ubiquinone oxidoreductase (complex I, CI) and ubiquinol-cytochrome c oxidoreductase (cytochrome b-c1 complex, complex III, CIII), resulting in different assemblies (supercomplex SCI(1)III(2)IV(1) and megacomplex MCI(2)III(2)IV(2)).

The protein localises to the mitochondrion inner membrane. It functions in the pathway energy metabolism; oxidative phosphorylation. In terms of biological role, component of the cytochrome c oxidase, the last enzyme in the mitochondrial electron transport chain which drives oxidative phosphorylation. The respiratory chain contains 3 multisubunit complexes succinate dehydrogenase (complex II, CII), ubiquinol-cytochrome c oxidoreductase (cytochrome b-c1 complex, complex III, CIII) and cytochrome c oxidase (complex IV, CIV), that cooperate to transfer electrons derived from NADH and succinate to molecular oxygen, creating an electrochemical gradient over the inner membrane that drives transmembrane transport and the ATP synthase. Cytochrome c oxidase is the component of the respiratory chain that catalyzes the reduction of oxygen to water. Electrons originating from reduced cytochrome c in the intermembrane space (IMS) are transferred via the dinuclear copper A center (CU(A)) of subunit 2 and heme A of subunit 1 to the active site in subunit 1, a binuclear center (BNC) formed by heme A3 and copper B (CU(B)). The BNC reduces molecular oxygen to 2 water molecules using 4 electrons from cytochrome c in the IMS and 4 protons from the mitochondrial matrix. This is Cytochrome c oxidase subunit 6C-2 (Cox6c2) from Rattus norvegicus (Rat).